Reading from the N-terminus, the 167-residue chain is Protein-lysine myristoyltransferase RtxC (167 aa).

Residues H20 and D89 contribute to the active site.

It belongs to the RTX toxin acyltransferase family.

Its subcellular location is the cytoplasm. The enzyme catalyses tetradecanoyl-[ACP] + L-lysyl-[protein] = N(6)-tetradecanoyl-L-lysyl-[protein] + holo-[ACP] + H(+). Its function is as follows. Protein-lysine myristoyltransferase that catalyzes myristoylation of the protoxin (RtxA) at two internal lysine residues, thereby converting it to the active toxin. This chain is Protein-lysine myristoyltransferase RtxC, found in Kingella kingae.